We begin with the raw amino-acid sequence, 1007 residues long: Probable inorganic carbon transporter subunit DabA (1007 aa).

The Zn(2+) site is built by Cys442, Asp444, His696, and Cys711.

This sequence belongs to the inorganic carbon transporter (TC 9.A.2) DabA family. As to quaternary structure, forms a complex with DabB. Zn(2+) is required as a cofactor.

The protein localises to the cell inner membrane. Part of an energy-coupled inorganic carbon pump. The sequence is that of Probable inorganic carbon transporter subunit DabA from Aquifex aeolicus (strain VF5).